We begin with the raw amino-acid sequence, 296 residues long: 33 kDa chaperonin (296 aa).

Cystine bridges form between Cys-238–Cys-240 and Cys-271–Cys-274.

This sequence belongs to the HSP33 family. Under oxidizing conditions two disulfide bonds are formed involving the reactive cysteines. Under reducing conditions zinc is bound to the reactive cysteines and the protein is inactive.

The protein resides in the cytoplasm. Its function is as follows. Redox regulated molecular chaperone. Protects both thermally unfolding and oxidatively damaged proteins from irreversible aggregation. Plays an important role in the bacterial defense system toward oxidative stress. The chain is 33 kDa chaperonin from Clostridium botulinum (strain Loch Maree / Type A3).